The primary structure comprises 477 residues: MKDSLPAFEKAKVLVVGDVMLDRYWTGPTGRISPEAPVPVVRINQLEDRPGGAANVALNIATLGGQVSLAGIVGEDETAAALTTGIQALGVEPKWHVVADKPTITKLRVMSRSQQLIRLDFEEPYQQADSQALLDSAANSLADVDVVILSDYAKGALIEPLAFIQQAKSQGVKVLVDPKGSDFSKYRGATLLTPNLHEFELVAGAVTSEADLVEKAHKLLEEFDLEALLVTRSEQGMTLITAENKELHIPTVAREVHDVTGAGDTVISALATSLAAGSTMAEACAIANTAAGIVVAKLGTSTVSRIELIESLSDTHHSETGFGVVTEDQLMYALEQTRLRGERVVMTNGCFDILHAGHVSYLQEAQAQGDRLIVAVNDDDSVRRLKGDGRPVNPVGRRMAVLAGLASVDWVLPFSEDTPQRVIARLLPDLLVKGGDYKIEDIAGGKEVIAAGGLVKILCFEDGISTTKIIENIMANQ.

The ribokinase stretch occupies residues 1-320 (MKDSLPAFEK…SLSDTHHSET (320 aa)). ATP is bound at residue 195–198 (NLHE). Residue Asp264 is part of the active site. The interval 346-477 (MTNGCFDILH…KIIENIMANQ (132 aa)) is cytidylyltransferase.

This sequence in the N-terminal section; belongs to the carbohydrate kinase PfkB family. It in the C-terminal section; belongs to the cytidylyltransferase family. In terms of assembly, homodimer.

It catalyses the reaction D-glycero-beta-D-manno-heptose 7-phosphate + ATP = D-glycero-beta-D-manno-heptose 1,7-bisphosphate + ADP + H(+). The catalysed reaction is D-glycero-beta-D-manno-heptose 1-phosphate + ATP + H(+) = ADP-D-glycero-beta-D-manno-heptose + diphosphate. It functions in the pathway nucleotide-sugar biosynthesis; ADP-L-glycero-beta-D-manno-heptose biosynthesis; ADP-L-glycero-beta-D-manno-heptose from D-glycero-beta-D-manno-heptose 7-phosphate: step 1/4. Its pathway is nucleotide-sugar biosynthesis; ADP-L-glycero-beta-D-manno-heptose biosynthesis; ADP-L-glycero-beta-D-manno-heptose from D-glycero-beta-D-manno-heptose 7-phosphate: step 3/4. Catalyzes the phosphorylation of D-glycero-D-manno-heptose 7-phosphate at the C-1 position to selectively form D-glycero-beta-D-manno-heptose-1,7-bisphosphate. Functionally, catalyzes the ADP transfer from ATP to D-glycero-beta-D-manno-heptose 1-phosphate, yielding ADP-D-glycero-beta-D-manno-heptose. The sequence is that of Bifunctional protein HldE from Shewanella piezotolerans (strain WP3 / JCM 13877).